The following is a 440-amino-acid chain: Ribosomal protein uS12 methylthiotransferase RimO (440 aa).

Residues 5–116 (PTIAISHLGC…IVSVIERAEQ (112 aa)) form the MTTase N-terminal domain. The [4Fe-4S] cluster site is built by Cys-14, Cys-50, Cys-79, Cys-154, Cys-158, and Cys-161. In terms of domain architecture, Radical SAM core spans 140 to 370 (TTTEGVAYLR…ALQQPISWRK (231 aa)). The region spanning 372–438 (QQEVGKTVEV…EYDLFGQVVS (67 aa)) is the TRAM domain.

Belongs to the methylthiotransferase family. RimO subfamily. Requires [4Fe-4S] cluster as cofactor.

It localises to the cytoplasm. It catalyses the reaction L-aspartate(89)-[ribosomal protein uS12]-hydrogen + (sulfur carrier)-SH + AH2 + 2 S-adenosyl-L-methionine = 3-methylsulfanyl-L-aspartate(89)-[ribosomal protein uS12]-hydrogen + (sulfur carrier)-H + 5'-deoxyadenosine + L-methionine + A + S-adenosyl-L-homocysteine + 2 H(+). Its function is as follows. Catalyzes the methylthiolation of an aspartic acid residue of ribosomal protein uS12. This Nostoc sp. (strain PCC 7120 / SAG 25.82 / UTEX 2576) protein is Ribosomal protein uS12 methylthiotransferase RimO.